Consider the following 984-residue polypeptide: Valine--tRNA ligase (984 aa).

The short motif at 65 to 75 is the 'HIGH' region element; that stretch reads PNVTGSLHMGH. The 'KMSKS' region signature appears at 579–583; the sequence is KMSKS. Lys-582 contacts ATP. A coiled-coil region spans residues 954 to 984; sequence VEVVDAEKAKLAELEGQLTAMTAQMEELKNL.

Belongs to the class-I aminoacyl-tRNA synthetase family. ValS type 1 subfamily. In terms of assembly, monomer.

It is found in the cytoplasm. The enzyme catalyses tRNA(Val) + L-valine + ATP = L-valyl-tRNA(Val) + AMP + diphosphate. Functionally, catalyzes the attachment of valine to tRNA(Val). As ValRS can inadvertently accommodate and process structurally similar amino acids such as threonine, to avoid such errors, it has a 'posttransfer' editing activity that hydrolyzes mischarged Thr-tRNA(Val) in a tRNA-dependent manner. This chain is Valine--tRNA ligase, found in Psychrobacter arcticus (strain DSM 17307 / VKM B-2377 / 273-4).